Here is a 416-residue protein sequence, read N- to C-terminus: Enterobactin exporter EntS (416 aa).

The Cytoplasmic portion of the chain corresponds to 1-21 (MNKQSWLLNLSLLKTHPAFRA). Residues 22–42 (VFLARFISIVSLGLLGVAVPV) form a helical membrane-spanning segment. Over 43–55 (QIQMMTHSTWLVG) the chain is Periplasmic. Residues 56–76 (LSVTLTGGAMFVGLMVGGVLA) form a helical membrane-spanning segment. At 77-83 (DRYERKK) the chain is on the cytoplasmic side. A helical transmembrane segment spans residues 84–104 (VILLARGTCGIGFIGLCLNAL). The Periplasmic portion of the chain corresponds to 105 to 109 (LPEPS). A helical transmembrane segment spans residues 110-130 (LLAIYLLGLWDGFFASLGVTA). At 131–156 (LLAATPALVGRENLMQAGAITMLTVR) the chain is on the cytoplasmic side. Residues 157–177 (LGSVISPMIGGLLLATGGVAW) traverse the membrane as a helical segment. A topological domain (periplasmic) is located at residue Asn178. Residues 179–199 (YGLAAAGTFITLLPLLSLPAL) form a helical membrane-spanning segment. Over 200–218 (PPPPQPREHPLKSLLAGFR) the chain is Cytoplasmic. The chain crosses the membrane as a helical span at residues 219–239 (FLLASPLVGGIALLGGLLTMA). The Periplasmic segment spans residues 240-256 (SAVRVLYPALADNWQMS). The helical transmembrane segment at 257–277 (AAEIGFLYAAIPLGAAIGALT) threads the bilayer. Topologically, residues 278 to 287 (SGKLAHSARP) are cytoplasmic. Residues 288–307 (GLLMLLSTLGSFLAIGLFGL) traverse the membrane as a helical segment. Over 308–313 (MPMWIL) the chain is Periplasmic. Residues 314 to 336 (GVVCLALFGWLSAVSSLLQYTML) form a helical membrane-spanning segment. Residues 337 to 356 (QTQTPEAMLGRINGLWTAQN) lie on the Cytoplasmic side of the membrane. A helical membrane pass occupies residues 357-377 (VTGDAIGAALLGGLGAMMTPV). Residue Ala378 is a topological domain, periplasmic. A helical membrane pass occupies residues 379-399 (SASASGFGLLIIGVLLLLVLV). The Cytoplasmic segment spans residues 400 to 416 (ELRRFRQTPPQVTASDS).

It belongs to the major facilitator superfamily. EntS (TC 2.A.1.38) family.

It localises to the cell inner membrane. Functionally, component of an export pathway for enterobactin. The polypeptide is Enterobactin exporter EntS (Shigella boydii serotype 4 (strain Sb227)).